A 251-amino-acid chain; its full sequence is Malonyl-[acyl-carrier protein] O-methyltransferase (251 aa).

This sequence belongs to the methyltransferase superfamily.

The catalysed reaction is malonyl-[ACP] + S-adenosyl-L-methionine = malonyl-[ACP] methyl ester + S-adenosyl-L-homocysteine. The protein operates within cofactor biosynthesis; biotin biosynthesis. Its function is as follows. Converts the free carboxyl group of a malonyl-thioester to its methyl ester by transfer of a methyl group from S-adenosyl-L-methionine (SAM). It allows to synthesize pimeloyl-ACP via the fatty acid synthetic pathway. The polypeptide is Malonyl-[acyl-carrier protein] O-methyltransferase (Erwinia billingiae (strain Eb661)).